A 246-amino-acid polypeptide reads, in one-letter code: NLP effector protein Pc118548 (246 aa).

The first 19 residues, 1–19 (MNFRAFLLAAIAGIATINA), serve as a signal peptide directing secretion. The Hepta-peptide GHRHDWE motif signature appears at 122-128 (GHRHYWE). N141 is a glycosylation site (N-linked (GlcNAc...) asparagine).

It belongs to the Necrosis inducing protein (NPP1) family.

The protein resides in the secreted. Secreted effector that contributes strongly to virulence during infection by P.capsici. Induces cell death in the Solanaceae, including Nicotiana benthamiana and hot pepper. This Phytophthora capsici protein is NLP effector protein Pc118548.